We begin with the raw amino-acid sequence, 145 residues long: 3-hydroxyacyl-[acyl-carrier-protein] dehydratase FabZ (145 aa).

Histidine 47 is an active-site residue.

It belongs to the thioester dehydratase family. FabZ subfamily.

It is found in the cytoplasm. It carries out the reaction a (3R)-hydroxyacyl-[ACP] = a (2E)-enoyl-[ACP] + H2O. Its function is as follows. Involved in unsaturated fatty acids biosynthesis. Catalyzes the dehydration of short chain beta-hydroxyacyl-ACPs and long chain saturated and unsaturated beta-hydroxyacyl-ACPs. This Thiobacillus denitrificans (strain ATCC 25259 / T1) protein is 3-hydroxyacyl-[acyl-carrier-protein] dehydratase FabZ.